The sequence spans 295 residues: uncharacterized protein (295 aa).

Residues Met1–Ser58 form the HTH lysR-type domain. The segment at residues Ile18–Gln37 is a DNA-binding region (H-T-H motif).

This sequence belongs to the LysR transcriptional regulatory family.

This is an uncharacterized protein from Bacillus subtilis (strain 168).